The primary structure comprises 350 residues: Inner membrane protein YhiM (350 aa).

At 1–2 the chain is on the cytoplasmic side; it reads MN. A helical transmembrane segment spans residues 3–23; it reads IYIGWLFKLIPLIMGLICIAL. At 24–41 the chain is on the periplasmic side; that stretch reads GGFVLESSGQSEYFVAGH. Residues 42 to 62 traverse the membrane as a helical segment; that stretch reads VLISLAAICLALFTTAFIIIS. The Cytoplasmic segment spans residues 63–74; that stretch reads QLTRGVNTFYNT. The helical transmembrane segment at 75 to 95 threads the bilayer; it reads LFPIIGYAGSIITMIWGWALL. The Periplasmic segment spans residues 96-104; it reads AGNDVMADE. Residues 105–125 form a helical membrane-spanning segment; that stretch reads FVAGHVIFGVGMIAACVSTVA. Residues 126 to 157 are Cytoplasmic-facing; it reads ASSGHFLLIPKNAAGSKSDGTPVQAYSSLIGN. The helical transmembrane segment at 158–178 threads the bilayer; that stretch reads CLIAVPVLLTLLGFIWSITLL. Over 179–190 the chain is Periplasmic; it reads RSADITPHYVAG. Residues 191 to 211 traverse the membrane as a helical segment; it reads HVLLGLTAICACLIGLVATIV. The Cytoplasmic segment spans residues 212–225; the sequence is HQTRNTFSTKEHWL. A helical membrane pass occupies residues 226-246; sequence WCYWVIFLGSITVLQGIYVLV. Topologically, residues 247–257 are periplasmic; that stretch reads SSDASARLAPG. A helical transmembrane segment spans residues 258-278; the sequence is IILICLGMICYSIFSKVWLLA. At 279-290 the chain is on the cytoplasmic side; the sequence is LVWRRTCSLANR. Residues 291–311 form a helical membrane-spanning segment; that stretch reads IPMIPVFTCLFCLFLASFLAE. Topologically, residues 312–324 are periplasmic; that stretch reads MAQTDMGYFIPSR. The helical transmembrane segment at 325 to 345 threads the bilayer; sequence VLVGLGAVCFTLFSIVSILEA. Topologically, residues 346–350 are cytoplasmic; it reads GSAKK.

The protein resides in the cell inner membrane. This is Inner membrane protein YhiM (yhiM) from Escherichia coli (strain K12).